The chain runs to 427 residues: GTPase Obg (427 aa).

Positions 1–158 (MFVDKVKVYV…RDVILELKVL (158 aa)) constitute an Obg domain. The interval 118–144 (KGGRGGRGNTRFATPANPAPELSENGE) is disordered. Residues 159–329 (ADAGLVGFPS…LLRAIMDTIE (171 aa)) enclose the OBG-type G domain. GTP contacts are provided by residues 165-172 (GFPSVGKS), 190-194 (FTTIT), 212-215 (DLPG), 282-285 (NKMD), and 310-312 (SAL). The Mg(2+) site is built by S172 and T192. In terms of domain architecture, OCT spans 349–427 (KHDKEQDPFV…LLEFEFEFIE (79 aa)).

It belongs to the TRAFAC class OBG-HflX-like GTPase superfamily. OBG GTPase family. Monomer. The cofactor is Mg(2+).

It localises to the cytoplasm. In terms of biological role, an essential GTPase which binds GTP, GDP and possibly (p)ppGpp with moderate affinity, with high nucleotide exchange rates and a fairly low GTP hydrolysis rate. Plays a role in control of the cell cycle, stress response, ribosome biogenesis and in those bacteria that undergo differentiation, in morphogenesis control. The sequence is that of GTPase Obg from Halalkalibacterium halodurans (strain ATCC BAA-125 / DSM 18197 / FERM 7344 / JCM 9153 / C-125) (Bacillus halodurans).